Reading from the N-terminus, the 301-residue chain is GPN-loop GTPase 3 (301 aa).

Position 13–18 (13–18) interacts with GTP; it reads GAGKST. The Gly-Pro-Asn (GPN)-loop; involved in dimer interface signature appears at 70 to 72; it reads GPN. 176 to 179 is a binding site for GTP; that stretch reads SKMD. The tract at residues 212 to 232 is disordered; it reads IAEGQDAEDDESKAPDEKDQV. A compositionally biased stretch (basic and acidic residues) spans 223–232; it reads SKAPDEKDQV.

It belongs to the GPN-loop GTPase family. As to quaternary structure, heterodimers with GPN1 or GPN2. Binds to RNA polymerase II (RNAPII).

In terms of biological role, small GTPase required for proper nuclear import of RNA polymerase II and III (RNAPII and RNAPIII). May act at an RNAP assembly step prior to nuclear import. The protein is GPN-loop GTPase 3 of Gibberella zeae (strain ATCC MYA-4620 / CBS 123657 / FGSC 9075 / NRRL 31084 / PH-1) (Wheat head blight fungus).